Reading from the N-terminus, the 300-residue chain is Putative S-adenosyl-L-methionine-dependent methyltransferase MUL_0817 (300 aa).

S-adenosyl-L-methionine is bound by residues aspartate 127 and 156–157 (DL).

It belongs to the UPF0677 family.

Exhibits S-adenosyl-L-methionine-dependent methyltransferase activity. This is Putative S-adenosyl-L-methionine-dependent methyltransferase MUL_0817 from Mycobacterium ulcerans (strain Agy99).